Here is a 359-residue protein sequence, read N- to C-terminus: Homoserine dehydrogenase (359 aa).

Residues Ala-13, Val-15, Val-16, and Ala-41 each contribute to the NAD(+) site. Val-16 lines the NADP(+) pocket. Val-16 is an NADPH binding site. Lys-60, Thr-93, Ser-94, and Lys-117 together coordinate NADPH. Thr-93 provides a ligand contact to NAD(+). Thr-93 provides a ligand contact to NADP(+). NADP(+) is bound at residue Lys-117. Na(+) is bound by residues Glu-143, Val-146, Ala-148, and Leu-150. The NADP(+) site is built by Gly-205 and Glu-208. L-homoserine contacts are provided by Glu-208 and Asp-219. Lys-223 acts as the Proton donor in catalysis. Lys-290 is covalently cross-linked (Glycyl lysine isopeptide (Lys-Gly) (interchain with G-Cter in ubiquitin)). Gly-340 contacts NAD(+). Gly-340 contacts NADP(+). Position 340 (Gly-340) interacts with NADPH.

It belongs to the homoserine dehydrogenase family. As to quaternary structure, homodimer. Requires a metal cation as cofactor.

It catalyses the reaction L-homoserine + NADP(+) = L-aspartate 4-semialdehyde + NADPH + H(+). The catalysed reaction is L-homoserine + NAD(+) = L-aspartate 4-semialdehyde + NADH + H(+). Its pathway is amino-acid biosynthesis; L-methionine biosynthesis via de novo pathway; L-homoserine from L-aspartate: step 3/3. It participates in amino-acid biosynthesis; L-threonine biosynthesis; L-threonine from L-aspartate: step 3/5. In terms of biological role, catalyzes the conversion of L-aspartate-beta-semialdehyde (L-Asa) to L-homoserine (L-Hse), the third step in the biosynthesis of amino acids that derive from aspartate (the aspartate family of amino acids), including methioinine and threonine, the latter of which is a precursor to isoleucine; production of homoserine leads to a branch-point in the pathway as it can either be O-phosphorylated for processing to threonine, or O-acylated for processing to methionine. This Saccharomyces cerevisiae (strain ATCC 204508 / S288c) (Baker's yeast) protein is Homoserine dehydrogenase (HOM6).